We begin with the raw amino-acid sequence, 525 residues long: 2,3-bisphosphoglycerate-independent phosphoglycerate mutase 2 (525 aa).

Mn(2+)-binding residues include aspartate 14 and serine 64. Serine 64 acts as the Phosphoserine intermediate in catalysis. Substrate contacts are provided by residues histidine 125, 155–156 (RD), arginine 187, arginine 193, 274–277 (RADR), and lysine 347. Aspartate 414, histidine 418, aspartate 455, histidine 456, and histidine 474 together coordinate Mn(2+).

The protein belongs to the BPG-independent phosphoglycerate mutase family. Requires Mn(2+) as cofactor.

It carries out the reaction (2R)-2-phosphoglycerate = (2R)-3-phosphoglycerate. It functions in the pathway carbohydrate degradation; glycolysis; pyruvate from D-glyceraldehyde 3-phosphate: step 3/5. Its function is as follows. Catalyzes the interconversion of 2-phosphoglycerate and 3-phosphoglycerate. The chain is 2,3-bisphosphoglycerate-independent phosphoglycerate mutase 2 from Methanosarcina barkeri (strain Fusaro / DSM 804).